The chain runs to 351 residues: Transcriptional activator POG1 (351 aa).

Positions 1-26 (MKQEPHRQSEEKEKPKGPMAVEREQH) are enriched in basic and acidic residues. The segment at 1 to 56 (MKQEPHRQSEEKEKPKGPMAVEREQHTSLSSGTTVTASTGDESTNSRPVESSQTEK) is disordered. Positions 27-56 (TSLSSGTTVTASTGDESTNSRPVESSQTEK) are enriched in polar residues. Phosphoserine is present on residues S152 and S168. 2 disordered regions span residues 234–256 (PGMGPQAQLPTMSSNSESQTPVM) and 291–351 (QHQL…PPPT). Residues 241–256 (QLPTMSSNSESQTPVM) are compositionally biased toward polar residues. S314 is subject to Phosphoserine.

This sequence belongs to the POG1 family. Post-translationally, phosphorylated by CDC28.

Its subcellular location is the nucleus. Transcriptional activator which promotes cell cycle recovery with CLN2, after pheromone induced G1 arrest, probably inhibiting the ability of STE20 to activate the pheromone response pathway. Binds the promoters of genes that function in cell cycle regulation, cytoskeletal organization, and spindle assembly. May also be involved in stress-resistance. The polypeptide is Transcriptional activator POG1 (POG1) (Saccharomyces cerevisiae (strain ATCC 204508 / S288c) (Baker's yeast)).